A 50-amino-acid chain; its full sequence is Large ribosomal subunit protein bL33B (50 aa).

The protein belongs to the bacterial ribosomal protein bL33 family.

This Streptococcus pyogenes serotype M1 protein is Large ribosomal subunit protein bL33B.